Here is a 136-residue protein sequence, read N- to C-terminus: ATP synthase epsilon chain (136 aa).

The protein belongs to the ATPase epsilon chain family. F-type ATPases have 2 components, CF(1) - the catalytic core - and CF(0) - the membrane proton channel. CF(1) has five subunits: alpha(3), beta(3), gamma(1), delta(1), epsilon(1). CF(0) has three main subunits: a, b and c.

It is found in the cellular thylakoid membrane. Functionally, produces ATP from ADP in the presence of a proton gradient across the membrane. This chain is ATP synthase epsilon chain (atpC), found in Prochloron didemni.